The sequence spans 248 residues: Isopentenyl phosphate kinase (248 aa).

7 to 11 lines the ATP pocket; it reads KLGGS. Substrate is bound at residue Gly-49. Position 50 (Gly-50) interacts with ATP. Substrate is bound by residues His-54 and Gly-152. ATP-binding residues include Gly-209 and Lys-213.

It belongs to the isopentenyl phosphate kinase family. In terms of assembly, homodimer.

The catalysed reaction is isopentenyl phosphate + ATP = isopentenyl diphosphate + ADP. Its function is as follows. Catalyzes the phosphorylation of isopentenyl phosphate (IP) to isopentenyl diphosphate (IPP). Functions in an alternate mevalonate (MVA) pathway leading to IPP, a key precursor for the biosynthesis of isoprenoid compounds such as archaeal membrane lipids. This chain is Isopentenyl phosphate kinase, found in Haloferax volcanii (strain ATCC 29605 / DSM 3757 / JCM 8879 / NBRC 14742 / NCIMB 2012 / VKM B-1768 / DS2) (Halobacterium volcanii).